The sequence spans 908 residues: MKIIFPILSNPVFRRTVKLLLCLLWIGYSQGTTHVLRFGGIFEYVESGPMGAEELAFRFAVNTINRNRTLLPNTTLTYDTQKINLYDSFEASKKACDQLSLGVAAIFGPSHSSSANAVQSICNALGVPHIQTRWKHQVSDNKDSFYVSLYPDFSSLSRAILDLVQFFKWKTVTVVYDDSTGLIRLQELIKAPSRYNLRLKIRQLPADTKDAKPLLKEMKRGKEFHVIFDCSHEMAAGILKQALAMGMMTEYYHYIFTTLDLFALDVEPYRYSGVNMTGFRILNTENTQVSSIIEKWSMERLQAPPKPDSGLLDGFMTTDAALMYDAVHVVSVAVQQFPQMTVSSLQCNRHKPWRFGTRFMSLIKEAHWEGLTGRITFNKTNGLRTDFDLDVISLKEEGLEKIGTWDPASGLNMTESQKGKPANITDSLSNRSLIVTTILEEPYVLFKKSDKPLYGNDRFEGYCIDLLRELSTILGFTYEIRLVEDGKYGAQDDANGQWNGMVRELIDHKADLAVAPLAITYVREKVIDFSKPFMTLGISILYRKPNGTNPGVFSFLNPLSPDIWMYVLLACLGVSCVLFVIARFSPYEWYNPHPCNPDSDVVENNFTLLNSFWFGVGALMRQGSELMPKALSTRIVGGIWWFFTLIIISSYTANLAAFLTVERMESPIDSADDLAKQTKIEYGAVEDGATMTFFKKSKISTYDKMWAFMSSRRQSVLVKSNEEGIQRVLTSDYAFLMESTTIEFVTQRNCNLTQIGGLIDSKGYGVGTPMGSPYRDKITIAILQLQEEGKLHMMKEKWWRGNGCPEEESKEASALGVQNIGGIFIVLAAGLVLSVFVAVGEFLYKSKKNAQLEKRSFCSAMVEELRMSLKCQRRLKHKPQAPVIVKTEEVINMHTFNDRRLPGKETMA.

The first 31 residues, 1-31, serve as a signal peptide directing secretion; that stretch reads MKIIFPILSNPVFRRTVKLLLCLLWIGYSQG. The Extracellular segment spans residues 32-561; that stretch reads TTHVLRFGGI…VFSFLNPLSP (530 aa). N-linked (GlcNAc...) asparagine glycosylation is found at Asn-67, Asn-73, Asn-275, Asn-378, Asn-412, Asn-423, and Asn-430. An intrachain disulfide couples Cys-96 to Cys-347. L-glutamate is bound by residues Pro-516, Ala-518, and Arg-523. An N-linked (GlcNAc...) asparagine glycan is attached at Asn-546. The chain crosses the membrane as a helical span at residues 562–582; it reads DIWMYVLLACLGVSCVLFVIA. Residues 583–638 lie on the Cytoplasmic side of the membrane; the sequence is RFSPYEWYNPHPCNPDSDVVENNFTLLNSFWFGVGALMRQGSELMPKALSTRIVGG. Residues 639–659 form a helical membrane-spanning segment; that stretch reads IWWFFTLIIISSYTANLAAFL. Residues 660–819 lie on the Extracellular side of the membrane; the sequence is TVERMESPID…KEASALGVQN (160 aa). L-glutamate contacts are provided by Ala-689, Thr-690, and Glu-738. A disulfide bond links Cys-750 and Cys-804. Asn-751 is a glycosylation site (N-linked (GlcNAc...) asparagine). The helical transmembrane segment at 820 to 840 threads the bilayer; the sequence is IGGIFIVLAAGLVLSVFVAVG. At 841–908 the chain is on the cytoplasmic side; it reads EFLYKSKKNA…RRLPGKETMA (68 aa). 2 positions are modified to phosphoserine; by PKC: Ser-846 and Ser-868. Lys-886 is covalently cross-linked (Glycyl lysine isopeptide (Lys-Gly) (interchain with G-Cter in SUMO1)).

It belongs to the glutamate-gated ion channel (TC 1.A.10.1) family. GRIK2 subfamily. In terms of assembly, homotetramer and heterotetramer with GRIK5. Tetramers may be formed by the dimerization of dimers. Assembles into a kainate-gated homomeric channel that does not bind AMPA. Can form functional heteromeric receptors with GRIK3, GRIK4 and GRIK5. Interacts with NETO2. Interacts with DLG4. Interacts with NETO2. Interacts (via C-terminus) with KLHL17 (via kelch repeats); the interaction targets GRIK2 for degradation via ubiquitin-proteasome pathway. Sumoylation mediates kainate receptor-mediated endocytosis and regulates synaptic transmission. Sumoylation is enhanced by PIAS3 and desumoylated by SENP1. Post-translationally, ubiquitinated. Ubiquitination regulates the GRIK2 levels at the synapse by leading kainate receptor degradation through proteasome. In terms of processing, phosphorylated by PKC at Ser-868 upon agonist activation, this directly enhance sumoylation.

It localises to the cell membrane. Its subcellular location is the postsynaptic cell membrane. The enzyme catalyses Ca(2+)(in) = Ca(2+)(out). The catalysed reaction is Na(+)(in) = Na(+)(out). With respect to regulation, cold receptor activity activated by temperatures between 10-19 degrees Celsius. In terms of biological role, ionotropic glutamate receptor that functions as a cation-permeable ligand-gated ion channel, gated by L-glutamate and the glutamatergic agonist kainic acid. L-glutamate acts as an excitatory neurotransmitter at many synapses in the central nervous system. Binding of the excitatory neurotransmitter L-glutamate induces a conformation change, leading to the opening of the cation channel, and thereby converts the chemical signal to an electrical impulse. The receptor then desensitizes rapidly and enters a transient inactive state, characterized by the presence of bound agonist. Modulates cell surface expression of NETO2. In association with GRIK3, involved in presynaptic facilitation of glutamate release at hippocampal mossy fiber synapses. Its function is as follows. Independent of its ionotropic glutamate receptor activity, acts as a thermoreceptor conferring sensitivity to cold temperatures. Functions in dorsal root ganglion neurons. This Macaca fascicularis (Crab-eating macaque) protein is Glutamate receptor ionotropic, kainate 2 (GRIK2).